Consider the following 424-residue polypeptide: Dihydroorotase (424 aa).

H58 and H60 together coordinate Zn(2+). Residues 60–62, N92, and N276 contribute to the substrate site; that span reads HLR. D303 contacts Zn(2+). The active site involves D303. Substrate is bound by residues H307 and 321 to 322; that span reads FG.

This sequence belongs to the metallo-dependent hydrolases superfamily. DHOase family. Class I DHOase subfamily. It depends on Zn(2+) as a cofactor.

The enzyme catalyses (S)-dihydroorotate + H2O = N-carbamoyl-L-aspartate + H(+). It participates in pyrimidine metabolism; UMP biosynthesis via de novo pathway; (S)-dihydroorotate from bicarbonate: step 3/3. In terms of biological role, catalyzes the reversible cyclization of carbamoyl aspartate to dihydroorotate. This Staphylococcus aureus (strain COL) protein is Dihydroorotase.